A 246-amino-acid polypeptide reads, in one-letter code: Probable transcriptional regulatory protein RB5500 (246 aa).

It belongs to the TACO1 family.

Its subcellular location is the cytoplasm. In Rhodopirellula baltica (strain DSM 10527 / NCIMB 13988 / SH1), this protein is Probable transcriptional regulatory protein RB5500.